The chain runs to 730 residues: 1,4-alpha-glucan branching enzyme GlgB (730 aa).

The active-site Nucleophile is the D405. The Proton donor role is filled by E458.

Belongs to the glycosyl hydrolase 13 family. GlgB subfamily. Monomer.

The enzyme catalyses Transfers a segment of a (1-&gt;4)-alpha-D-glucan chain to a primary hydroxy group in a similar glucan chain.. It participates in glycan biosynthesis; glycogen biosynthesis. Catalyzes the formation of the alpha-1,6-glucosidic linkages in glycogen by scission of a 1,4-alpha-linked oligosaccharide from growing alpha-1,4-glucan chains and the subsequent attachment of the oligosaccharide to the alpha-1,6 position. This chain is 1,4-alpha-glucan branching enzyme GlgB, found in Haemophilus influenzae (strain PittGG).